A 104-amino-acid chain; its full sequence is MKFFVYNPLLKTASLNIKVKAAAKSNDIKEFIIINDVLHLKLSIKAHAQQGKANEEIINFLAKEWQLLRSNLEITKGHTNSLKTILIKNIDEEYLNLILKPYIK.

Belongs to the UPF0235 family.

In Rickettsia bellii (strain RML369-C), this protein is UPF0235 protein RBE_0633.